Consider the following 619-residue polypeptide: 1-deoxy-D-xylulose-5-phosphate synthase (619 aa).

Residues histidine 76 and 117 to 119 contribute to the thiamine diphosphate site; that span reads AHS. Aspartate 148 contacts Mg(2+). Residues 149 to 150, asparagine 177, tyrosine 284, and glutamate 366 each bind thiamine diphosphate; that span reads GA. A Mg(2+)-binding site is contributed by asparagine 177.

The protein belongs to the transketolase family. DXPS subfamily. Homodimer. Requires Mg(2+) as cofactor. Thiamine diphosphate serves as cofactor.

It carries out the reaction D-glyceraldehyde 3-phosphate + pyruvate + H(+) = 1-deoxy-D-xylulose 5-phosphate + CO2. The protein operates within metabolic intermediate biosynthesis; 1-deoxy-D-xylulose 5-phosphate biosynthesis; 1-deoxy-D-xylulose 5-phosphate from D-glyceraldehyde 3-phosphate and pyruvate: step 1/1. Catalyzes the acyloin condensation reaction between C atoms 2 and 3 of pyruvate and glyceraldehyde 3-phosphate to yield 1-deoxy-D-xylulose-5-phosphate (DXP). This is 1-deoxy-D-xylulose-5-phosphate synthase from Azoarcus sp. (strain BH72).